The primary structure comprises 260 residues: Small ribosomal subunit protein uS3 (260 aa).

The KH type-2 domain occupies 39–114; that stretch reads LRQYIEQKLG…QIRINVVEVQ (76 aa). The interval 218–260 is disordered; sequence QEVATPPPSPRDRDRDRGDRDREPRRRQQQRRRQQFEDRSNEG. Composition is skewed to basic and acidic residues over residues 227 to 243 and 251 to 260; these read PRDRDRDRGDRDREPRR and QQFEDRSNEG.

This sequence belongs to the universal ribosomal protein uS3 family. As to quaternary structure, part of the 30S ribosomal subunit. Forms a tight complex with proteins S10 and S14.

Binds the lower part of the 30S subunit head. Binds mRNA in the 70S ribosome, positioning it for translation. This chain is Small ribosomal subunit protein uS3, found in Nostoc sp. (strain PCC 7120 / SAG 25.82 / UTEX 2576).